The chain runs to 272 residues: Cytochrome b-c1 complex subunit Rieske, mitochondrial (272 aa).

Residues 77–104 lie on the Mitochondrial matrix side of the membrane; the sequence is VHNDVTVPDFSAYRREDVMDATTSSQTS. A helical transmembrane segment spans residues 105–138; that stretch reads SEDRKGFSYLVTATACVATAYAAKNVVTQFISSL. Topologically, residues 139 to 272 are mitochondrial intermembrane; that stretch reads SASADVLALS…FVGDDLVVVG (134 aa). The region spanning 185–270 is the Rieske domain; that stretch reads EAEVDVSKLR…YQFVGDDLVV (86 aa). Residues Cys215, His217, Leu218, Cys234, His237, and Ser239 each coordinate [2Fe-2S] cluster. Cys220 and Cys236 form a disulfide bridge.

This sequence belongs to the Rieske iron-sulfur protein family. As to quaternary structure, component of the ubiquinol-cytochrome c oxidoreductase (cytochrome b-c1 complex, complex III, CIII), a multisubunit enzyme composed of 11 subunits. The complex is composed of 3 respiratory subunits cytochrome b, cytochrome c1 and Rieske protein UQCRFS1, 2 core protein subunits UQCRC1/QCR1 and UQCRC2/QCR2, and 6 low-molecular weight protein subunits UQCRH/QCR6, UQCRB/QCR7, UQCRQ/QCR8, UQCR10/QCR9, UQCR11/QCR10 and subunit 9, the cleavage product of Rieske protein UQCRFS1. The complex exists as an obligatory dimer and forms supercomplexes (SCs) in the inner mitochondrial membrane with NADH-ubiquinone oxidoreductase (complex I, CI) and cytochrome c oxidase (complex IV, CIV), resulting in different assemblies (supercomplex SCI(1)III(2)IV(1) and megacomplex MCI(2)III(2)IV(2)). Incorporation of the Rieske protein UQCRFS1 is the penultimate step in complex III assembly. Interacts with TTC19, which is involved in the clearance of UQCRFS1 fragments. In terms of assembly, component of the ubiquinol-cytochrome c oxidoreductase (cytochrome b-c1 complex, complex III, CIII). Subunit 9 corresponds to the mitochondrial targeting sequence (MTS) of Rieske protein UQCRFS1. It is retained after processing and incorporated inside complex III, where it remains bound to the complex and localizes between the 2 core subunits UQCRC1/QCR1 and UQCRC2/QCR2. Requires [2Fe-2S] cluster as cofactor. Post-translationally, proteolytic processing is necessary for the correct insertion of UQCRFS1 in the complex III dimer. Several fragments are generated during UQCRFS1 insertion, most probably due to the endogenous matrix-processing peptidase (MPP) activity of the 2 core protein subunits UQCRC1/QCR1 and UQCRC2/QCR2, which are homologous to the 2 mitochondrial-processing peptidase (MPP) subunits beta-MPP and alpha-MPP respectively. The action of the protease is also necessary for the clearance of the UQCRFS1 fragments.

It is found in the mitochondrion inner membrane. It carries out the reaction a quinol + 2 Fe(III)-[cytochrome c](out) = a quinone + 2 Fe(II)-[cytochrome c](out) + 2 H(+)(out). Component of the ubiquinol-cytochrome c oxidoreductase, a multisubunit transmembrane complex that is part of the mitochondrial electron transport chain which drives oxidative phosphorylation. The respiratory chain contains 3 multisubunit complexes succinate dehydrogenase (complex II, CII), ubiquinol-cytochrome c oxidoreductase (cytochrome b-c1 complex, complex III, CIII) and cytochrome c oxidase (complex IV, CIV), that cooperate to transfer electrons derived from NADH and succinate to molecular oxygen, creating an electrochemical gradient over the inner membrane that drives transmembrane transport and the ATP synthase. The cytochrome b-c1 complex catalyzes electron transfer from ubiquinol to cytochrome c, linking this redox reaction to translocation of protons across the mitochondrial inner membrane, with protons being carried across the membrane as hydrogens on the quinol. In the process called Q cycle, 2 protons are consumed from the matrix, 4 protons are released into the intermembrane space and 2 electrons are passed to cytochrome c. The Rieske protein is a catalytic core subunit containing a [2Fe-2S] iron-sulfur cluster. It cycles between 2 conformational states during catalysis to transfer electrons from the quinol bound in the Q(0) site in cytochrome b to cytochrome c1. Incorporation of UQCRFS1 is the penultimate step in complex III assembly. Its function is as follows. Component of the ubiquinol-cytochrome c oxidoreductase (cytochrome b-c1 complex, complex III, CIII). UQCRFS1 undergoes proteolytic processing once it is incorporated in the complex III dimer. One of the fragments, called subunit 9, corresponds to its mitochondrial targeting sequence (MTS). The proteolytic processing is necessary for the correct insertion of UQCRFS1 in the complex III dimer, but the persistence of UQCRFS1-derived fragments may prevent newly imported UQCRFS1 to be processed and assembled into complex III and is detrimental for the complex III structure and function. This chain is Cytochrome b-c1 complex subunit Rieske, mitochondrial (UQCRFS1), found in Gallus gallus (Chicken).